The following is a 695-amino-acid chain: Polyribonucleotide nucleotidyltransferase (695 aa).

The Mg(2+) site is built by aspartate 488 and aspartate 494. The KH domain maps to 554 to 613 (PKTAVIKIQTDKIRDLIGKGGETIKGIISTSSASVDVDDNGNVNIFSNDQKSFDTAMQMV). One can recognise an S1 motif domain in the interval 623–690 (GKVYTGKVVK…DRGRIKLSRK (68 aa)).

The protein belongs to the polyribonucleotide nucleotidyltransferase family. As to quaternary structure, component of the RNA degradosome, which is a multiprotein complex involved in RNA processing and mRNA degradation. The cofactor is Mg(2+).

It is found in the cytoplasm. It catalyses the reaction RNA(n+1) + phosphate = RNA(n) + a ribonucleoside 5'-diphosphate. Functionally, involved in mRNA degradation. Catalyzes the phosphorolysis of single-stranded polyribonucleotides processively in the 3'- to 5'-direction. This Ruthia magnifica subsp. Calyptogena magnifica protein is Polyribonucleotide nucleotidyltransferase.